A 505-amino-acid chain; its full sequence is ATP synthase subunit alpha, chloroplastic (505 aa).

ATP is bound at residue 170–177 (GDRQTGKT).

This sequence belongs to the ATPase alpha/beta chains family. As to quaternary structure, F-type ATPases have 2 components, CF(1) - the catalytic core - and CF(0) - the membrane proton channel. CF(1) has five subunits: alpha(3), beta(3), gamma(1), delta(1), epsilon(1). CF(0) has four main subunits: a, b, b' and c.

It is found in the plastid. The protein resides in the chloroplast thylakoid membrane. It catalyses the reaction ATP + H2O + 4 H(+)(in) = ADP + phosphate + 5 H(+)(out). In terms of biological role, produces ATP from ADP in the presence of a proton gradient across the membrane. The alpha chain is a regulatory subunit. The polypeptide is ATP synthase subunit alpha, chloroplastic (Oenothera elata subsp. hookeri (Hooker's evening primrose)).